Consider the following 240-residue polypeptide: Ribonuclease HII (240 aa).

The RNase H type-2 domain occupies 7 to 215 (RYAIGIDEAG…LKRIAPGWYV (209 aa)). 3 residues coordinate a divalent metal cation: Asp13, Glu14, and Asp112.

Belongs to the RNase HII family. The cofactor is Mn(2+). Mg(2+) is required as a cofactor.

The protein resides in the cytoplasm. The enzyme catalyses Endonucleolytic cleavage to 5'-phosphomonoester.. In terms of biological role, endonuclease that specifically degrades the RNA of RNA-DNA hybrids. The chain is Ribonuclease HII from Hyperthermus butylicus (strain DSM 5456 / JCM 9403 / PLM1-5).